The primary structure comprises 252 residues: Diphthine synthase (252 aa).

Residues Leu9, Asp85, Val88, 113–114 (SI), Leu165, Ala204, and His229 contribute to the S-adenosyl-L-methionine site.

Belongs to the diphthine synthase family. In terms of assembly, homodimer.

The enzyme catalyses 2-[(3S)-amino-3-carboxypropyl]-L-histidyl-[translation elongation factor 2] + 3 S-adenosyl-L-methionine = diphthine-[translation elongation factor 2] + 3 S-adenosyl-L-homocysteine + 3 H(+). The protein operates within protein modification; peptidyl-diphthamide biosynthesis. S-adenosyl-L-methionine-dependent methyltransferase that catalyzes the trimethylation of the amino group of the modified target histidine residue in translation elongation factor 2 (EF-2), to form an intermediate called diphthine. The three successive methylation reactions represent the second step of diphthamide biosynthesis. This chain is Diphthine synthase, found in Methanocorpusculum labreanum (strain ATCC 43576 / DSM 4855 / Z).